The sequence spans 580 residues: WD repeat-containing protein 46 (580 aa).

The segment at 34-108 is disordered; that stretch reads SWKEYKKMKQ…QQEKMKVTKD (75 aa). Basic and acidic residues-rich tracts occupy residues 64–85 and 98–108; these read TEGR…HDTG and LQQEKMKVTKD. WD repeat units follow at residues 193-234, 235-272, 274-312, 315-354, 357-396, and 399-436; these read AALD…YTYV, YDNL…NSFL, YVDV…HTNG, SLWS…GLDR, RIWD…NHVQ, and RGMH…IGHA.

Part of the small subunit (SSU) processome.

The protein resides in the nucleus. It localises to the nucleolus. Functionally, scaffold component of the nucleolar structure. Part of the small subunit (SSU) processome, first precursor of the small eukaryotic ribosomal subunit. Required for 18S rRNA processing. Plays a role in negative regulation of detoxification genes by inhibiting protein levels of transcription factor skn-1, leading to down-regulation of skn-1 target genes. This chain is WD repeat-containing protein 46, found in Caenorhabditis elegans.